The following is a 364-amino-acid chain: Long-wave-sensitive opsin 1 (364 aa).

The Extracellular portion of the chain corresponds to M1–V52. The O-linked (GlcNAc) serine glycan is linked to S22. Residue N34 is glycosylated (N-linked (GlcNAc...) asparagine). Residues Y53–A77 form a helical membrane-spanning segment. Over T78–N89 the chain is Cytoplasmic. A helical transmembrane segment spans residues W90–M115. Residues Y116 to E129 are Extracellular-facing. C126 and C203 form a disulfide bridge. A helical transmembrane segment spans residues G130–W149. Over E150 to L168 the chain is Cytoplasmic. The helical transmembrane segment at A169–S192 threads the bilayer. At R193–S218 the chain is on the extracellular side. The chain crosses the membrane as a helical span at residues Y219–I246. At R247–R268 the chain is on the cytoplasmic side. The helical transmembrane segment at M269 to A292 threads the bilayer. The Extracellular portion of the chain corresponds to A293–H300. The helical transmembrane segment at P301–M325 threads the bilayer. At K312 the chain carries N6-(retinylidene)lysine. The Cytoplasmic portion of the chain corresponds to N326–A364.

This sequence belongs to the G-protein coupled receptor 1 family. Opsin subfamily. Phosphorylated on some or all of the serine and threonine residues present in the C-terminal region. As to expression, expressed in retina (at protein level). Expressed in cone and/or rod photoreceptor cells (at protein level).

It is found in the membrane. Visual pigments are the light-absorbing molecules that mediate vision. They consist of an apoprotein, opsin, covalently linked to cis-retinal. This Bos taurus (Bovine) protein is Long-wave-sensitive opsin 1 (OPN1LW).